The primary structure comprises 534 residues: MSDVSGRFVVAAAVVAVSLAMAAAAAAHDYGEALSKSLLYFEAQRSGRLPYNQRVRWRGHSGLTDGLEQGVDLVGGYYDAGDHVKFGLPMAFTVTMLSWSVLEYGEEIAAAGELGHALHAIKWGTDYFIKAHTHPNVLWTQVGDGDSDHYCWQRPEDMTTSRHAYKVDAENPGSEVAAETAAAMAAASIVFRRAGDAHYAHLLLHHAQQLFEFGDKYRGRYDESVEVVKNYYPSSSGYKDELLWAALWLHRATGRREYLDYAVDNADDFGGTGWAVSEFSWDIKYAGLQVLASKLLVEEKHLSSQQREVLEKYRSKAEYYVCSCMGRNPGGAAHNAGRTPAGLLFIRPWNNLQYVSNAAFLLTVYSDVLSYLSLPLLCPDPDAAADEAAPAAADAGEVLEFARSQADYILGTNPMATSYLVGYGEAYPRRVHHRAASSASYARDRDFIGCLQGFDSWYSAAAENPHDLVGAVVGGPNGNDVFTDHRGAYMQTEACTYNTAPMVGVFSRLMELERRRRGEDAPPSSTSPVAEDDL.

Residues 1-27 (MSDVSGRFVVAAAVVAVSLAMAAAAAA) form the signal peptide. Asp-82 functions as the Nucleophile in the catalytic mechanism. Catalysis depends on residues His-432, Asp-484, and Glu-493. Residues 515–534 (RRRGEDAPPSSTSPVAEDDL) form a disordered region.

This sequence belongs to the glycosyl hydrolase 9 (cellulase E) family.

The protein localises to the secreted. The catalysed reaction is Endohydrolysis of (1-&gt;4)-beta-D-glucosidic linkages in cellulose, lichenin and cereal beta-D-glucans.. This is Endoglucanase 5 from Oryza sativa subsp. japonica (Rice).